The following is a 51-amino-acid chain: Large ribosomal subunit protein bL33 (51 aa).

It belongs to the bacterial ribosomal protein bL33 family.

This chain is Large ribosomal subunit protein bL33, found in Methylococcus capsulatus (strain ATCC 33009 / NCIMB 11132 / Bath).